Reading from the N-terminus, the 98-residue chain is Homeobox protein Ht-En (98 aa).

The homeobox DNA-binding region spans 3–62 (EKRPRTAFTGDQLARLKREFSENKYLTEQRRTCLAKELNLNESQIKIWFQNKRAKMKKAS). The tract at residues 79 to 98 (NHSSSSSSSSSSSSSIFLLA) is disordered. Positions 81–98 (SSSSSSSSSSSSSIFLLA) are enriched in low complexity.

This sequence belongs to the engrailed homeobox family. Post-translationally, phosphorylated in the Ser-rich domain.

It is found in the nucleus. Its function is as follows. This protein specifies the body segmentation pattern. The sequence is that of Homeobox protein Ht-En (HT-EN) from Helobdella triserialis (Leech).